A 156-amino-acid chain; its full sequence is ATP synthase subunit b (156 aa).

The helical transmembrane segment at 3 to 23 (ITFTIFAQSLAFAALIWIVAT) threads the bilayer.

It belongs to the ATPase B chain family. In terms of assembly, F-type ATPases have 2 components, F(1) - the catalytic core - and F(0) - the membrane proton channel. F(1) has five subunits: alpha(3), beta(3), gamma(1), delta(1), epsilon(1). F(0) has three main subunits: a(1), b(2) and c(10-14). The alpha and beta chains form an alternating ring which encloses part of the gamma chain. F(1) is attached to F(0) by a central stalk formed by the gamma and epsilon chains, while a peripheral stalk is formed by the delta and b chains.

Its subcellular location is the cell inner membrane. Functionally, f(1)F(0) ATP synthase produces ATP from ADP in the presence of a proton or sodium gradient. F-type ATPases consist of two structural domains, F(1) containing the extramembraneous catalytic core and F(0) containing the membrane proton channel, linked together by a central stalk and a peripheral stalk. During catalysis, ATP synthesis in the catalytic domain of F(1) is coupled via a rotary mechanism of the central stalk subunits to proton translocation. In terms of biological role, component of the F(0) channel, it forms part of the peripheral stalk, linking F(1) to F(0). This Xylella fastidiosa (strain 9a5c) protein is ATP synthase subunit b.